Consider the following 132-residue polypeptide: Phosphoribosyl-AMP cyclohydrolase (132 aa).

D82 provides a ligand contact to Mg(2+). Zn(2+) is bound at residue C83. Residues D84 and D86 each contribute to the Mg(2+) site. The Zn(2+) site is built by C100 and C107.

Belongs to the PRA-CH family. In terms of assembly, homodimer. Mg(2+) is required as a cofactor. Zn(2+) serves as cofactor.

Its subcellular location is the cytoplasm. The enzyme catalyses 1-(5-phospho-beta-D-ribosyl)-5'-AMP + H2O = 1-(5-phospho-beta-D-ribosyl)-5-[(5-phospho-beta-D-ribosylamino)methylideneamino]imidazole-4-carboxamide. The protein operates within amino-acid biosynthesis; L-histidine biosynthesis; L-histidine from 5-phospho-alpha-D-ribose 1-diphosphate: step 3/9. Its function is as follows. Catalyzes the hydrolysis of the adenine ring of phosphoribosyl-AMP. The polypeptide is Phosphoribosyl-AMP cyclohydrolase (Dechloromonas aromatica (strain RCB)).